The following is a 78-amino-acid chain: Acyl carrier protein (78 aa).

The 76-residue stretch at Ser2–Gln77 folds into the Carrier domain. At Ser37 the chain carries O-(pantetheine 4'-phosphoryl)serine.

This sequence belongs to the acyl carrier protein (ACP) family. 4'-phosphopantetheine is transferred from CoA to a specific serine of apo-ACP by AcpS. This modification is essential for activity because fatty acids are bound in thioester linkage to the sulfhydryl of the prosthetic group.

The protein resides in the cytoplasm. It functions in the pathway lipid metabolism; fatty acid biosynthesis. Carrier of the growing fatty acid chain in fatty acid biosynthesis. The protein is Acyl carrier protein of Yersinia pseudotuberculosis serotype O:1b (strain IP 31758).